The chain runs to 1272 residues: Regulator of nonsense transcripts 2 (1272 aa).

Positions 1 to 114 are enriched in basic and acidic residues; it reads MPAERKKPAS…QEEQAKRQQE (114 aa). 4 disordered regions span residues 1 to 126, 370 to 389, 423 to 445, and 490 to 517; these read MPAE…EKEE, DHRE…HSKG, NMPD…DIFT, and CQNK…SPDD. Residues 54 to 134 adopt a coiled-coil conformation; that stretch reads EDKKKRLEDD…EESIQLHQEA (81 aa). Residues 94 to 133 form a sufficient for interaction with UPF1 region; sequence KKKHQEEERKKQEEQAKRQQEEEAAAQMKEKEESIQLHQE. The region spanning 168-431 is the MIF4G 1 domain; that stretch reads LKKNTAFVKK…ENMPDLPQDK (264 aa). Composition is skewed to basic and acidic residues over residues 428 to 439 and 490 to 513; these read PQDKPTPEEHGP and CQNK…KEVS. Positions 487-559 form a coiled coil; sequence EKSCQNKESN…EQEQEDEEAS (73 aa). MIF4G domains are found at residues 569–758 and 773–986; these read DAFL…CNPP and EYVR…LRPK. A sufficient for interaction with UPF3A and UPF3B region spans residues 711–928; it reads GRFLFRSPES…IRLVCTILDT (218 aa). A sufficient for interaction with EIF4A1 and EIF1 region spans residues 757–1272; it reads PPPAEKTVKK…LIFKTGGRRR (516 aa). Positions 839-859 are binds to UPF3B; the sequence is EDVGIHVVDGVLEDIRLGMEV. Residues 1018-1098 are disordered; it reads DSKDSMTEGE…DEENTEVMIK (81 aa). A compositionally biased stretch (acidic residues) spans 1027-1076; that stretch reads ENLEEDEEEEEGGAETEEQSGNESEVNEPEEEEGSDNDDDEGEEEEEENT. Positions 1084–1272 are sufficient for interaction with UPF1 C-terminus; the sequence is KENETDEENT…LIFKTGGRRR (189 aa). Residue Thr-1088 is modified to Phosphothreonine. Interaction with UPF1 regions lie at residues 1105-1129 and 1167-1207; these read VPCV…QQRS and DTMP…AEQE. Positions 1105-1198 are necessary for interaction with UPF1; that stretch reads VPCVEDEDFI…PMSSQLAANH (94 aa). Positions 1220 to 1272 are disordered; that stretch reads NERQEQEDYQEMLQSLAQRPAPANTNRERRPRYQHPKGAPNADLIFKTGGRRR.

As to quaternary structure, found in a post-splicing messenger ribonucleoprotein (mRNP) complex. Associates with the exon junction complex (EJC). Interacts with SMG1, EST1A, UPF1, UPF3A, UPF3B, EIF4A1 and EIF1. In terms of tissue distribution, ubiquitous.

It localises to the cytoplasm. Its subcellular location is the perinuclear region. Functionally, involved in nonsense-mediated decay (NMD) of mRNAs containing premature stop codons by associating with the nuclear exon junction complex (EJC). Recruited by UPF3B associated with the EJC core at the cytoplasmic side of the nuclear envelope and the subsequent formation of an UPF1-UPF2-UPF3 surveillance complex (including UPF1 bound to release factors at the stalled ribosome) is believed to activate NMD. In cooperation with UPF3B stimulates both ATPase and RNA helicase activities of UPF1. Binds spliced mRNA. The sequence is that of Regulator of nonsense transcripts 2 from Homo sapiens (Human).